The chain runs to 235 residues: Germin-like protein 1-4 (235 aa).

A signal peptide spans 1-27; sequence MAAKLPTVVLLASFAAVILSLAAPLLA. A disulfide bridge connects residues Cys-37 and Cys-55. An N-linked (GlcNAc...) asparagine glycan is attached at Asn-60. The Cupin type-1 domain maps to 69 to 226; that stretch reads PGLGKPADVY…AFQVDGGVVE (158 aa). His-120, His-122, Glu-127, and His-171 together coordinate Mn(2+).

It belongs to the germin family. Oligomer (believed to be a pentamer but probably hexamer).

The protein localises to the secreted. It localises to the extracellular space. It is found in the apoplast. Its function is as follows. May play a role in plant defense. Probably has no oxalate oxidase activity even if the active site is conserved. The chain is Germin-like protein 1-4 from Oryza sativa subsp. japonica (Rice).